Here is a 160-residue protein sequence, read N- to C-terminus: SsrA-binding protein (160 aa).

The protein belongs to the SmpB family.

Its subcellular location is the cytoplasm. Functionally, required for rescue of stalled ribosomes mediated by trans-translation. Binds to transfer-messenger RNA (tmRNA), required for stable association of tmRNA with ribosomes. tmRNA and SmpB together mimic tRNA shape, replacing the anticodon stem-loop with SmpB. tmRNA is encoded by the ssrA gene; the 2 termini fold to resemble tRNA(Ala) and it encodes a 'tag peptide', a short internal open reading frame. During trans-translation Ala-aminoacylated tmRNA acts like a tRNA, entering the A-site of stalled ribosomes, displacing the stalled mRNA. The ribosome then switches to translate the ORF on the tmRNA; the nascent peptide is terminated with the 'tag peptide' encoded by the tmRNA and targeted for degradation. The ribosome is freed to recommence translation, which seems to be the essential function of trans-translation. The protein is SsrA-binding protein of Marinobacter nauticus (strain ATCC 700491 / DSM 11845 / VT8) (Marinobacter aquaeolei).